Consider the following 334-residue polypeptide: Fructose-1,6-bisphosphatase class 1 (334 aa).

The Mg(2+) site is built by Glu-91, Asp-113, Leu-115, and Asp-116. Substrate is bound by residues 116 to 119, Asn-208, and Lys-274; that span reads DGSS. A Mg(2+)-binding site is contributed by Glu-280.

Belongs to the FBPase class 1 family. As to quaternary structure, homotetramer. The cofactor is Mg(2+).

It is found in the cytoplasm. The enzyme catalyses beta-D-fructose 1,6-bisphosphate + H2O = beta-D-fructose 6-phosphate + phosphate. It participates in carbohydrate biosynthesis; gluconeogenesis. The polypeptide is Fructose-1,6-bisphosphatase class 1 (Herminiimonas arsenicoxydans).